The sequence spans 148 residues: MEVILLEKIANLGNLGDKVNVKAGYGRNFLLPQGKATAATAENVAAFEARRAELEKLAAEKKASAEARAAQLAELEVTITATAGDEGKLFGSIGTHDIADALTASGVEVAKAEVRLPNGTIRQVGEYDVALHLHTDVEATVKVIVVAA.

Belongs to the bacterial ribosomal protein bL9 family.

Binds to the 23S rRNA. This is Large ribosomal subunit protein bL9 from Ectopseudomonas mendocina (strain ymp) (Pseudomonas mendocina).